Consider the following 403-residue polypeptide: Accessory Sec system protein translocase subunit SecY2 (403 aa).

A run of 10 helical transmembrane segments spans residues 17 to 37 (MLYT…SIVS), 63 to 83 (LNIF…LMLI), 105 to 125 (ILTL…YVSK), 131 to 151 (DNIY…VWLA), 157 to 177 (YGIA…MMHQ), 186 to 206 (HIVI…LLFI), 240 to 260 (ITLM…HFIL), 276 to 296 (FDSP…GYFL), 339 to 359 (WFGS…TLFV), and 366 to 386 (IYFS…AETI).

It belongs to the SecY/SEC61-alpha family. SecY2 subfamily. Component of the accessory SecA2/SecY2 protein translocase complex required to export cell wall proteins. May form heterotrimers with SecE and SecG subunits.

It is found in the cell membrane. Its function is as follows. Part of the accessory SecA2/SecY2 system specifically required for export of possible cell wall proteins. The central subunit of a protein translocation channel. The chain is Accessory Sec system protein translocase subunit SecY2 from Staphylococcus aureus (strain N315).